The primary structure comprises 118 residues: Large ribosomal subunit protein uL22 (118 aa).

It belongs to the universal ribosomal protein uL22 family. In terms of assembly, part of the 50S ribosomal subunit.

This protein binds specifically to 23S rRNA; its binding is stimulated by other ribosomal proteins, e.g. L4, L17, and L20. It is important during the early stages of 50S assembly. It makes multiple contacts with different domains of the 23S rRNA in the assembled 50S subunit and ribosome. Functionally, the globular domain of the protein is located near the polypeptide exit tunnel on the outside of the subunit, while an extended beta-hairpin is found that lines the wall of the exit tunnel in the center of the 70S ribosome. In Leuconostoc citreum (strain KM20), this protein is Large ribosomal subunit protein uL22.